A 1500-amino-acid polypeptide reads, in one-letter code: Copper-transporting ATPase 1 (1500 aa).

Topologically, residues 1–653 (MDPSMGVNSV…KREIRQWRRS (653 aa)) are cytoplasmic. 2 HMA domains span residues 8-74 (NSVT…FDAV) and 85-151 (TDTL…LDTG). Positions 18, 19, and 22 each coordinate Cu(+). At threonine 152 the chain carries Phosphothreonine. One can recognise an HMA 3 domain in the interval 171–237 (VVLKMKVEGM…QIEAMGFPAF (67 aa)). Cysteine 182 and cysteine 185 together coordinate Cu(+). A Phosphoserine modification is found at serine 270. Positions 277–343 (STATFIIDGM…AIEAVSPGLY (67 aa)) constitute an HMA 4 domain. Positions 288 and 291 each coordinate Cu(+). Threonine 327 is modified (phosphothreonine). A phosphoserine mark is found at serine 339, serine 353, serine 357, and serine 362. HMA domains lie at 377 to 443 (QETV…FDAT), 488 to 554 (SKCY…FGAT), and 564 to 630 (GVLE…FEAS). 6 residues coordinate Cu(+): cysteine 388, cysteine 391, cysteine 499, cysteine 502, cysteine 575, and cysteine 578. Residues 654–675 (FLVSLFFCIPVMGLMIYMMVMD) form a helical membrane-spanning segment. The Extracellular segment spans residues 676–714 (HHFATLHHNQNMSKEEMINLHSSMFLERQILPGLSVMNL). Asparagine 686 carries N-linked (GlcNAc...) asparagine glycosylation. A helical transmembrane segment spans residues 715–734 (LSFLLCVPVQFFGGWYFYIQ). Over 735–741 (AYKALKH) the chain is Cytoplasmic. The helical transmembrane segment at 742–762 (KTANMDVLIVLATTIAFAYSL) threads the bilayer. Over 763 to 781 (IILLVAMYERAKVNPITFF) the chain is Extracellular. The helical transmembrane segment at 782–802 (DTPPMLFVFIALGRWLEHIAK) threads the bilayer. Topologically, residues 803–936 (GKTSEALAKL…KAPIQQFADK (134 aa)) are cytoplasmic. A helical membrane pass occupies residues 937 to 959 (LSGYFVPFIVFVSIATLLVWIVI). Topologically, residues 960–989 (GFLNFEIVETYFPGYNRSISRTETIIRFAF) are extracellular. An N-linked (GlcNAc...) asparagine glycan is attached at asparagine 975. Residues 990–1011 (QASITVLCIACPCSLGLATPTA) form a helical membrane-spanning segment. Residues 1012-1356 (VMVGTGVGAQ…LSRKTVKRIR (345 aa)) lie on the Cytoplasmic side of the membrane. The active-site 4-aspartylphosphate intermediate is aspartate 1044. Residue glutamate 1081 participates in ATP binding. Residue threonine 1212 is modified to Phosphothreonine. Residues aspartate 1301 and aspartate 1305 each contribute to the Mg(2+) site. The chain crosses the membrane as a helical span at residues 1357–1374 (INFVFALIYNLVGIPIAA). Topologically, residues 1375 to 1385 (GVFMPIGLVLQ) are extracellular. A helical membrane pass occupies residues 1386–1405 (PWMGSAAMAASSVSVVLSSL). The Cytoplasmic portion of the chain corresponds to 1406–1500 (FLKLYRKPTY…DFREDDDTAL (95 aa)). Serine 1430, serine 1432, serine 1460, serine 1463, and serine 1466 each carry phosphoserine. The short motif at 1467–1468 (LL) is the Endocytosis signal element. Phosphoserine occurs at positions 1469, 1473, 1476, and 1486. Residues 1486-1500 (SLLVGDFREDDDTAL) are PDZD11-binding. Positions 1487 to 1488 (LL) match the Endocytosis signal motif.

This sequence belongs to the cation transport ATPase (P-type) (TC 3.A.3) family. Type IB subfamily. As to quaternary structure, monomer. Interacts with PDZD11. Interacts with ATOX1 and COMMD1. Interacts with TYRP1. Directly interacts with SOD3; this interaction is copper-dependent and is required for SOD3 activity. Widely expressed including in heart, brain, lung, muscle, kidney, pancreas, and to a lesser extent placenta. Expressed in fibroblasts, aortic smooth muscle cells, aortic endothelial cells and umbilical vein endothelial cells (at protein level). In terms of tissue distribution, expressed in cerebellum and brain cortex.

It is found in the golgi apparatus. The protein resides in the trans-Golgi network membrane. Its subcellular location is the cell membrane. It localises to the melanosome membrane. The protein localises to the early endosome membrane. It is found in the cell projection. The protein resides in the axon. Its subcellular location is the dendrite. It localises to the postsynaptic density. The protein localises to the cytoplasm. It is found in the cytosol. The protein resides in the endoplasmic reticulum. It catalyses the reaction Cu(+)(in) + ATP + H2O = Cu(+)(out) + ADP + phosphate + H(+). Its function is as follows. ATP-driven copper (Cu(+)) ion pump that plays an important role in intracellular copper ion homeostasis. Within a catalytic cycle, acquires Cu(+) ion from donor protein on the cytoplasmic side of the membrane and delivers it to acceptor protein on the lumenal side. The transfer of Cu(+) ion across the membrane is coupled to ATP hydrolysis and is associated with a transient phosphorylation that shifts the pump conformation from inward-facing to outward-facing state. Under physiological conditions, at low cytosolic copper concentration, it is localized at the trans-Golgi network (TGN) where it transfers Cu(+) ions to cuproenzymes of the secretory pathway. Upon elevated cytosolic copper concentrations, it relocalizes to the plasma membrane where it is responsible for the export of excess Cu(+) ions. May play a dual role in neuron function and survival by regulating cooper efflux and neuronal transmission at the synapse as well as by supplying Cu(+) ions to enzymes such as PAM, TYR and SOD3. In the melanosomes of pigmented cells, provides copper cofactor to TYR to form an active TYR holoenzyme for melanin biosynthesis. This is Copper-transporting ATPase 1 from Homo sapiens (Human).